The sequence spans 902 residues: Transcription factor FPSE_08121 (902 aa).

The tract at residues 1 to 47 (MVSPDNRPGTQGPSASAHAHDSRVPRKRPGSWDNNPSTAGNRAVKKR) is disordered. The zn(2)-C6 fungal-type DNA-binding region spans 52 to 81 (CVSCRDRKVRCDVVNGGPPCTNCRLDDVDC). 4 disordered regions span residues 92-189 (NPAR…EAEQ), 208-234 (HCEQ…PANP), 258-277 (ATEA…SANT), and 820-839 (TGVA…PNMT). Low complexity predominate over residues 120–137 (TDADTAAPGPAPGSASAT). The segment covering 168–177 (ETICDDDENE) has biased composition (acidic residues). Composition is skewed to polar residues over residues 178–187 (NNSWHNQQEA), 220–234 (GAAT…PANP), 262–277 (PPSS…SANT), and 826–839 (GQRS…PNMT).

Its subcellular location is the nucleus. In terms of biological role, transcription factor; part of the Fusarium detoxification of benzoxazolinone cluster involved in the degradation of benzoxazolinones produced by the host plant. Maize, wheat, and rye produce the 2 benzoxazinone phytoanticipins 2,4-dihy-droxy-7-methoxy-1,4-benzoxazin-3-one (DIMBOA) and 2,4-dihydroxy-1,4-benzoxazin-3-one (DIBOA) that, due to their inherent instability once released, spontaneously degrade to the more stable corresponding benzoxazolinones, 6-methoxy-2-benzoxazolinone (MBOA) and 2-benzoxazolinone (BOA), respectively. FPSE_08121 positively regulates the expression of the FBD cluster gene FPSE_08120 in response to 2-aminophenol (2-AP) treatment and contributes quantitatively to benzoxazolinone tolerance. This chain is Transcription factor FPSE_08121, found in Fusarium pseudograminearum (strain CS3096) (Wheat and barley crown-rot fungus).